The following is a 269-amino-acid chain: Tryptophan synthase alpha chain (269 aa).

Catalysis depends on proton acceptor residues E49 and D60.

The protein belongs to the TrpA family. In terms of assembly, tetramer of two alpha and two beta chains.

The catalysed reaction is (1S,2R)-1-C-(indol-3-yl)glycerol 3-phosphate + L-serine = D-glyceraldehyde 3-phosphate + L-tryptophan + H2O. It participates in amino-acid biosynthesis; L-tryptophan biosynthesis; L-tryptophan from chorismate: step 5/5. Its function is as follows. The alpha subunit is responsible for the aldol cleavage of indoleglycerol phosphate to indole and glyceraldehyde 3-phosphate. This is Tryptophan synthase alpha chain from Actinobacillus pleuropneumoniae serotype 5b (strain L20).